Consider the following 403-residue polypeptide: Golgin-45 (403 aa).

The segment at 1 to 63 (MEKMTTLKSS…PRKKVSSDSP (63 aa)) is disordered. Residues 22–26 (RGAGD) carry the Tankyrase-binding motif motif. S53 carries the post-translational modification Phosphoserine. Positions 123-216 (RKELSEVKKV…QLERMSIQCD (94 aa)) form a coiled coil. Position 356 is a phosphoserine (S356). The interval 397-403 (QGELIAL) is essential for interaction with GORASP2.

Interacts with GORASP2. Interacts with the GTP-bound form of RAB2, but not with other Golgi Rab proteins. Identified in a complex with RAB2 and GORASP2. Post-translationally, ADP-ribosylated by tankyrase TNKS and TNKS2. Poly-ADP-ribosylated protein is recognized by RNF146, followed by ubiquitination. Ubiquitinated by RNF146 when poly-ADP-ribosylated, leading to its degradation.

It localises to the golgi apparatus membrane. Its function is as follows. Required for normal Golgi structure and for protein transport from the endoplasmic reticulum (ER) through the Golgi apparatus to the cell surface. The polypeptide is Golgin-45 (Blzf1) (Mus musculus (Mouse)).